Consider the following 356-residue polypeptide: Beta-hexosaminidase (356 aa).

Residues Asp-75, Arg-83, Arg-150, and 180 to 181 contribute to the substrate site; that span reads KH. Catalysis depends on His-193, which acts as the Proton donor/acceptor. Asp-264 acts as the Nucleophile in catalysis.

The protein belongs to the glycosyl hydrolase 3 family. NagZ subfamily.

It localises to the cytoplasm. It catalyses the reaction Hydrolysis of terminal non-reducing N-acetyl-D-hexosamine residues in N-acetyl-beta-D-hexosaminides.. It functions in the pathway cell wall biogenesis; peptidoglycan recycling. Plays a role in peptidoglycan recycling by cleaving the terminal beta-1,4-linked N-acetylglucosamine (GlcNAc) from peptide-linked peptidoglycan fragments, giving rise to free GlcNAc, anhydro-N-acetylmuramic acid and anhydro-N-acetylmuramic acid-linked peptides. The chain is Beta-hexosaminidase from Aromatoleum aromaticum (strain DSM 19018 / LMG 30748 / EbN1) (Azoarcus sp. (strain EbN1)).